We begin with the raw amino-acid sequence, 94 residues long: Evasin P1104 (94 aa).

The signal sequence occupies residues 1–28 (MASNLFTIFQLAGFVAIVFIVNLHSVSA). 3 disulfide bridges follow: C48–C66, C52–C68, and C62–C79. N51 is a glycosylation site (N-linked (GlcNAc...) asparagine).

The protein localises to the secreted. Functionally, salivary chemokine-binding protein which binds to host chemokines CXCL1, CXCL2, CXCL3, CXCL5, CXCL6, CXCL12 and CXCL13. The sequence is that of Evasin P1104 from Ixodes ricinus (Common tick).